The chain runs to 396 residues: Tryptophan synthase beta chain (396 aa).

Lysine 86 carries the post-translational modification N6-(pyridoxal phosphate)lysine.

It belongs to the TrpB family. As to quaternary structure, tetramer of two alpha and two beta chains. Pyridoxal 5'-phosphate is required as a cofactor.

The catalysed reaction is (1S,2R)-1-C-(indol-3-yl)glycerol 3-phosphate + L-serine = D-glyceraldehyde 3-phosphate + L-tryptophan + H2O. It participates in amino-acid biosynthesis; L-tryptophan biosynthesis; L-tryptophan from chorismate: step 5/5. In terms of biological role, the beta subunit is responsible for the synthesis of L-tryptophan from indole and L-serine. The chain is Tryptophan synthase beta chain from Yersinia pseudotuberculosis serotype O:1b (strain IP 31758).